Consider the following 133-residue polypeptide: UPF0102 protein Fnod_1509 (133 aa).

This sequence belongs to the UPF0102 family.

In Fervidobacterium nodosum (strain ATCC 35602 / DSM 5306 / Rt17-B1), this protein is UPF0102 protein Fnod_1509.